The sequence spans 142 residues: DNA-directed RNA polymerase II subunit RPB4 (142 aa).

It belongs to the eukaryotic RPB4 RNA polymerase subunit family. As to quaternary structure, component of the RNA polymerase II (Pol II) core complex consisting of 12 subunits: a ten-subunit catalytic core composed of POLR2A/RPB1, POLR2B/RPB2, POLR2C/RPB3, POLR2I/RPB9, POLR2J/RPB11, POLR2E/RPABC1, POLR2F/RPABC2, POLR2H/RPABC3, POLR2K/RPABC4 and POLR2L/RPABC5 and a mobile stalk composed of two subunits POLR2D/RPB4 and POLR2G/RPB7, protruding from the core and functioning primarily in transcription initiation. Part of Pol II(G) complex, in which Pol II core associates with an additional subunit POLR2M; unlike conventional Pol II, Pol II(G) functions as a transcriptional repressor. Part of TBP-based Pol II pre-initiation complex (PIC), in which Pol II core assembles with general transcription factors and other specific initiation factors including GTF2E1, GTF2E2, GTF2F1, GTF2F2, TCEA1, ERCC2, ERCC3, GTF2H2, GTF2H3, GTF2H4, GTF2H5, GTF2A1, GTF2A2, GTF2B and TBP; this large multi-subunit PIC complex mediates DNA unwinding and targets Pol II core to the transcription start site where the first phosphodiester bond forms.

The protein localises to the nucleus. Functionally, core component of RNA polymerase II (Pol II), a DNA-dependent RNA polymerase which synthesizes mRNA precursors and many functional non-coding RNAs using the four ribonucleoside triphosphates as substrates. Pol II is the central component of the basal RNA polymerase II transcription machinery. It is composed of mobile elements that move relative to each other. POLR2D/RPB4 is part of a subcomplex with POLR2G/RPB7 that binds to a pocket formed by POLR2A/RPB1, POLR2B/RPB2 and POLR2F/RPABC2 at the base of the clamp element. The POLR2D/RPB4-POLR2G/RPB7 subcomplex seems to lock the clamp via POLR2G/RPB7 in the closed conformation thus preventing double-stranded DNA to enter the active site cleft. The POLR2D/RPB4-POLR2G/RPB7 subcomplex binds single-stranded DNA and RNA. This is DNA-directed RNA polymerase II subunit RPB4 (POLR2D) from Homo sapiens (Human).